Reading from the N-terminus, the 308-residue chain is Putative mitochondrial transporter UCP3 (308 aa).

The Mitochondrial intermembrane portion of the chain corresponds to 1–10 (MVGLQPSEVP). Residues 11 to 32 (PTTVVKFLGAGTAACFADLLTF) form a helical membrane-spanning segment. Solcar repeat units lie at residues 11–102 (PTTV…VKQF), 111–202 (SSVA…IKEK), and 211–296 (DNFP…LKRA). Topologically, residues 33-73 (PLDTAKVRLQIQGENPGAQSVQYRGVLGTILTMVRTEGPRS) are mitochondrial matrix. The chain crosses the membrane as a helical span at residues 74-96 (PYSGLVAGLHRQMSFASIRIGLY). Topologically, residues 97–116 (DSVKQFYTPKGADHSSVAIR) are mitochondrial intermembrane. Residues 117 to 133 (ILAGCTTGAMAVTCAQP) form a helical membrane-spanning segment. Topologically, residues 134–179 (TDVVKVRFQAMIRLGTGGERKYRGTMDAYRTIAREEGVRGLWKGTW) are mitochondrial matrix. The chain crosses the membrane as a helical span at residues 180-196 (PNITRNAIVNCAEMVTY). The Mitochondrial intermembrane portion of the chain corresponds to 197 to 213 (DIIKEKLLESHLFTDNF). Residues 214 to 233 (PCHFVSAFGAGFCATVVASP) form a helical membrane-spanning segment. Topologically, residues 234–267 (VDVVKTRYMNAPLGRYRSPLHCMLKMVAQEGPTA) are mitochondrial matrix. Residues 268–290 (FYKGFVPSFLRLGAWNVMMFVTY) traverse the membrane as a helical segment. A purine nucleotide binding region spans residues 275 to 297 (SFLRLGAWNVMMFVTYEQLKRAL). Residues 291–308 (EQLKRALMKVQVLRESPF) lie on the Mitochondrial intermembrane side of the membrane.

The protein belongs to the mitochondrial carrier (TC 2.A.29) family. Interacts with HAX1; the interaction is direct and calcium-dependent.

Its subcellular location is the mitochondrion inner membrane. Inhibited by purine nucleotides and inorganic phosphate (in vitro). Its function is as follows. Putative transmembrane transporter that plays a role in mitochondrial metabolism via an as yet unclear mechanism. Originally, this mitochondrial protein was thought to act as a proton transmembrane transporter from the mitochondrial intermembrane space into the matrix, causing proton leaks through the inner mitochondrial membrane, thereby uncoupling mitochondrial membrane potential generation from ATP synthesis. However, this function is controversial and uncoupling may not be the function, or at least not the main function, but rather a consequence of more conventional metabolite transporter activity. The sequence is that of Putative mitochondrial transporter UCP3 from Mus musculus (Mouse).